Reading from the N-terminus, the 820-residue chain is DNA replication helicase (820 aa).

An ATP-binding site is contributed by 90–97 (GTAGAGKT).

Belongs to the herpesviridae helicase family. Associates with the primase and the primase-associated factor to form the helicase-primase complex.

Its subcellular location is the host nucleus. In terms of biological role, component of the helicase/primase complex. Unwinds the DNA at the replication forks and generates single-stranded DNA for both leading and lagging strand synthesis. The primase synthesizes short RNA primers on the lagging strand that the polymerase elongates using dNTPs. Possesses helicase-like motifs and therefore may act as the helicase subunit of the complex. The protein is DNA replication helicase of Human herpesvirus 7 (strain JI) (HHV-7).